Here is a 192-residue protein sequence, read N- to C-terminus: Elongation factor P (192 aa).

The segment at 133–157 (EVTETTPGVKGDTAQGGDKPATLES) is disordered.

This sequence belongs to the elongation factor P family.

It is found in the cytoplasm. Its pathway is protein biosynthesis; polypeptide chain elongation. Its function is as follows. Involved in peptide bond synthesis. Stimulates efficient translation and peptide-bond synthesis on native or reconstituted 70S ribosomes in vitro. Probably functions indirectly by altering the affinity of the ribosome for aminoacyl-tRNA, thus increasing their reactivity as acceptors for peptidyl transferase. The polypeptide is Elongation factor P (Salinibacter ruber (strain DSM 13855 / M31)).